The chain runs to 231 residues: Small ribosomal subunit protein uS5 (231 aa).

Residues 1–63 (MADLENKTVK…KSVDRANKVK (63 aa)) form a disordered region. Residues 29 to 60 (KRTESGAKKQIWEKRSAHDSKDMPKKSVDRAN) are compositionally biased toward basic and acidic residues. Residues 75-138 (FSEKVVNISR…KDARNHLISV (64 aa)) form the S5 DRBM domain.

It belongs to the universal ribosomal protein uS5 family. As to quaternary structure, part of the 30S ribosomal subunit. Contacts proteins S4 and S8.

With S4 and S12 plays an important role in translational accuracy. Functionally, located at the back of the 30S subunit body where it stabilizes the conformation of the head with respect to the body. This chain is Small ribosomal subunit protein uS5, found in Mycoplasmopsis agalactiae (strain NCTC 10123 / CIP 59.7 / PG2) (Mycoplasma agalactiae).